The chain runs to 450 residues: Protein tweety homolog 1 (450 aa).

At 1 to 43 (MGAPPGYRPSAWVHLLHQLPRADFQLRPVPSGFAPRDQEYQQA) the chain is on the extracellular side. Residues 44-64 (LLLVAALAGLGLGLSLIFIAV) form a helical membrane-spanning segment. The Cytoplasmic segment spans residues 65 to 88 (YLIRFCCCRPPEPHGAKSPPPGGG). A helical transmembrane segment spans residues 89–109 (CVTWSCIAALLVGCAGIGIGF). Residues 110–214 (YGNSETSDGV…DVTFVEEYRW (105 aa)) lie on the Extracellular side of the membrane. N-linked (GlcNAc...) asparagine glycosylation occurs at asparagine 130. A helical transmembrane segment spans residues 215-235 (LAYVLLLLLVLLVCLFTLLGL). Residues 236 to 240 (AKQSK) lie on the Cytoplasmic side of the membrane. A helical membrane pass occupies residues 241–261 (WLVVVMTAMSLLVLVLSWGSM). At 262-390 (GLEAATAVGL…LRGLCEDALE (129 aa)) the chain is on the extracellular side. 2 disulfides stabilise this stretch: cysteine 275–cysteine 385 and cysteine 303–cysteine 370. N-linked (GlcNAc...) asparagine glycosylation is found at asparagine 284 and asparagine 355. A helical membrane pass occupies residues 391 to 411 (GLLFLMLFSLLSAGALATTLC). The Cytoplasmic segment spans residues 412–450 (SLPRAWALFPPSDDYDDTDDDDPFNPQESKRFVQWQSSI). The segment at 428 to 450 (DTDDDDPFNPQESKRFVQWQSSI) is disordered. Serine 440 carries the post-translational modification Phosphoserine.

The protein belongs to the tweety family. Homotetramer; disulfide-linked. Homodimer. In terms of processing, N-glycosylated. Contains high-mannose, hybrid and complex oligosaccharides. Expressed in the astrocytes (at protein level). Restricted mainly to neural tissues. Strongly expressed in brain and eye.

Its subcellular location is the cell membrane. It catalyses the reaction chloride(in) = chloride(out). The catalysed reaction is L-glutamate(out) = L-glutamate(in). Its activity is regulated as follows. Inhibited by (4-[(2-butyl-6,7-dichloro-2- cyclopentyl-2,3-dihydro-1-oxo-1H-inden-5-yl)oxy]butanoic acid). Calcium-independent, swelling-dependent volume-regulated anion channel (VRAC-swell) which plays a pivotal role in the process of regulatory volume decrease (RVD) in the brain through the efflux of anions like chloride and organic osmolytes like glutamate. The chain is Protein tweety homolog 1 (Ttyh1) from Mus musculus (Mouse).